The following is a 400-amino-acid chain: S-adenosylmethionine synthase (400 aa).

Residue G136–D141 coordinates ATP.

This sequence belongs to the AdoMet synthase 2 family. It depends on Mg(2+) as a cofactor.

The enzyme catalyses L-methionine + ATP + H2O = S-adenosyl-L-methionine + phosphate + diphosphate. It participates in amino-acid biosynthesis; S-adenosyl-L-methionine biosynthesis; S-adenosyl-L-methionine from L-methionine: step 1/1. Its function is as follows. Catalyzes the formation of S-adenosylmethionine from methionine and ATP. This chain is S-adenosylmethionine synthase, found in Methanospirillum hungatei JF-1 (strain ATCC 27890 / DSM 864 / NBRC 100397 / JF-1).